A 574-amino-acid polypeptide reads, in one-letter code: K(+)/H(+) antiporter NhaP2 (574 aa).

13 helical membrane passes run 6-26 (INSFFLIGALLTAVSVLLSPM), 34-54 (ILLIFLAVGILAGEDGPGGIL), 58-78 (YSTAYLVSNFALAIILLDGGM), 87-107 (VALWPALSLATFGVAITTSIT), 109-129 (VMAAWLFDLHWLQGLLVGAIV), 173-193 (IAILANVGAELSASFMLISFI), 196-216 (FGLGVLLGLGGGWLLWKLVNV), 219-239 (LAEGLYSILVLSGGLMIYATS), 242-262 (LGGSGILSIYLVGLFLGNKPT), 271-291 (VLDGMTWVSQIGMFLVLGLLL), 299-319 (IWLPGLALAFGMILFARPLAV), 335-355 (WFISWVGLRGAVPIILAVFPM), and 359-379 (LPGAQLYFNLAFFVVIVSLLV). In terms of domain architecture, RCK C-terminal spans 405–486 (SGVEIYPKSE…LEALSNLFSQ (82 aa)).

It belongs to the monovalent cation:proton antiporter 1 (CPA1) transporter (TC 2.A.36) family. NhaP2 subfamily.

It localises to the cell inner membrane. The catalysed reaction is K(+)(in) + H(+)(out) = K(+)(out) + H(+)(in). Functionally, k(+)/H(+) antiporter that extrudes potassium in exchange for external protons and maintains the internal concentration of potassium under toxic levels. This is K(+)/H(+) antiporter NhaP2 from Shewanella oneidensis (strain ATCC 700550 / JCM 31522 / CIP 106686 / LMG 19005 / NCIMB 14063 / MR-1).